The chain runs to 270 residues: Formamidopyrimidine-DNA glycosylase (270 aa).

The active-site Schiff-base intermediate with DNA is the proline 2. Glutamate 3 functions as the Proton donor in the catalytic mechanism. Lysine 58 acts as the Proton donor; for beta-elimination activity in catalysis. DNA is bound by residues histidine 92, arginine 111, and arginine 153. The FPG-type zinc finger occupies 238-270; sequence SVYGASVCPVCGGALRQIRLAQRGTWFCPRCQR. Residue arginine 260 is the Proton donor; for delta-elimination activity of the active site.

It belongs to the FPG family. As to quaternary structure, monomer. Requires Zn(2+) as cofactor.

It catalyses the reaction Hydrolysis of DNA containing ring-opened 7-methylguanine residues, releasing 2,6-diamino-4-hydroxy-5-(N-methyl)formamidopyrimidine.. The catalysed reaction is 2'-deoxyribonucleotide-(2'-deoxyribose 5'-phosphate)-2'-deoxyribonucleotide-DNA = a 3'-end 2'-deoxyribonucleotide-(2,3-dehydro-2,3-deoxyribose 5'-phosphate)-DNA + a 5'-end 5'-phospho-2'-deoxyribonucleoside-DNA + H(+). Its function is as follows. Involved in base excision repair of DNA damaged by oxidation or by mutagenic agents. Acts as a DNA glycosylase that recognizes and removes damaged bases. Has a preference for oxidized purines, such as 7,8-dihydro-8-oxoguanine (8-oxoG). Has AP (apurinic/apyrimidinic) lyase activity and introduces nicks in the DNA strand. Cleaves the DNA backbone by beta-delta elimination to generate a single-strand break at the site of the removed base with both 3'- and 5'-phosphates. This chain is Formamidopyrimidine-DNA glycosylase, found in Halorhodospira halophila (strain DSM 244 / SL1) (Ectothiorhodospira halophila (strain DSM 244 / SL1)).